Consider the following 219-residue polypeptide: Ribose-5-phosphate isomerase A (219 aa).

Substrate is bound by residues 28–31, 81–84, and 94–97; these read TGST, DGAD, and KGGG. E103 serves as the catalytic Proton acceptor. K121 serves as a coordination point for substrate.

Belongs to the ribose 5-phosphate isomerase family. As to quaternary structure, homodimer.

It carries out the reaction aldehydo-D-ribose 5-phosphate = D-ribulose 5-phosphate. It functions in the pathway carbohydrate degradation; pentose phosphate pathway; D-ribose 5-phosphate from D-ribulose 5-phosphate (non-oxidative stage): step 1/1. Catalyzes the reversible conversion of ribose-5-phosphate to ribulose 5-phosphate. The protein is Ribose-5-phosphate isomerase A of Enterobacter cloacae.